The sequence spans 124 residues: Late histone H2B.2.1 (124 aa).

The tract at residues 1–32 (MPAKQTSGKGAKKAGKAKGRPAGASKTRRRKR) is disordered. The segment covering 10–19 (GAKKAGKAKG) has biased composition (basic residues). O-linked (GlcNAc) serine glycosylation is present at S111. K119 participates in a covalent cross-link: Glycyl lysine isopeptide (Lys-Gly) (interchain with G-Cter in ubiquitin).

The protein belongs to the histone H2B family. As to quaternary structure, the nucleosome is a histone octamer containing two molecules each of H2A, H2B, H3 and H4 assembled in one H3-H4 heterotetramer and two H2A-H2B heterodimers. The octamer wraps approximately 147 bp of DNA. Monoubiquitination of Lys-119 gives a specific tag for epigenetic transcriptional activation and is also prerequisite for histone H3 'Lys-4' and 'Lys-79' methylation. In terms of processing, glcNAcylation at Ser-111 promotes monoubiquitination of Lys-119. It fluctuates in response to extracellular glucose, and associates with transcribed genes.

It is found in the nucleus. The protein localises to the chromosome. Its function is as follows. Core component of nucleosome. Nucleosomes wrap and compact DNA into chromatin, limiting DNA accessibility to the cellular machineries which require DNA as a template. Histones thereby play a central role in transcription regulation, DNA repair, DNA replication and chromosomal stability. DNA accessibility is regulated via a complex set of post-translational modifications of histones, also called histone code, and nucleosome remodeling. This is Late histone H2B.2.1 from Psammechinus miliaris (Green sea urchin).